The sequence spans 262 residues: Octanoyltransferase (262 aa).

One can recognise a BPL/LPL catalytic domain in the interval 41–232 (PQLPDGLLLL…SFCQVFGLQA (192 aa)). Substrate contacts are provided by residues 96-103 (RGGEVTYH), 163-165 (AIG), and 176-178 (GFA). Cys-194 functions as the Acyl-thioester intermediate in the catalytic mechanism.

Belongs to the LipB family.

It is found in the cytoplasm. The catalysed reaction is octanoyl-[ACP] + L-lysyl-[protein] = N(6)-octanoyl-L-lysyl-[protein] + holo-[ACP] + H(+). The protein operates within protein modification; protein lipoylation via endogenous pathway; protein N(6)-(lipoyl)lysine from octanoyl-[acyl-carrier-protein]: step 1/2. In terms of biological role, catalyzes the transfer of endogenously produced octanoic acid from octanoyl-acyl-carrier-protein onto the lipoyl domains of lipoate-dependent enzymes. Lipoyl-ACP can also act as a substrate although octanoyl-ACP is likely to be the physiological substrate. This chain is Octanoyltransferase, found in Synechococcus sp. (strain JA-2-3B'a(2-13)) (Cyanobacteria bacterium Yellowstone B-Prime).